Here is a 2543-residue protein sequence, read N- to C-terminus: Zinc finger FYVE domain-containing protein 26 (2543 aa).

Ser-297 is modified (phosphoserine). Disordered regions lie at residues 523-545 (ECRD…SLSS), 609-636 (GLLG…GCQE), 699-722 (LSSH…SRDG), and 744-820 (VTSN…GRLQ). Residues Ser-615, Ser-619, and Ser-703 each carry the phosphoserine modification. Positions 699 to 710 (LSSHSPPEKPKL) are enriched in basic and acidic residues. Over residues 767–776 (SLRRGRRTRR) the composition is skewed to basic residues. A compositionally biased stretch (low complexity) spans 786 to 806 (SNPSLESTSSELSTSTSEGSL). Ser-802 carries the phosphoserine modification. Residues 870-897 (MFMERYQEVIQELSRVEHKIENQNSDGG) adopt a coiled-coil conformation. Residues 1272 to 1299 (LSTLSSPKPTGNSTLERKPHSSPRDSSL) are disordered. Polar residues predominate over residues 1273-1285 (STLSSPKPTGNST). Phosphoserine occurs at positions 1744, 1765, 1784, and 1786. The interval 1780 to 1812 (STIHSPSPRERSFPESQPPPEFVPPATPPGRPQ) is disordered. A compositionally biased stretch (pro residues) spans 1795–1810 (SQPPPEFVPPATPPGR). The FYVE-type zinc-finger motif lies at 1816–1876 (DESASICMVC…VCDQCYSYYN (61 aa)). Zn(2+) is bound by residues Cys-1822, Cys-1825, Cys-1839, Cys-1842, Cys-1847, Cys-1850, Cys-1868, and Cys-1871.

It belongs to the ZFYVE26 family. As to quaternary structure, interacts with AP5Z1, AP5B1, AP5S1 and SPG11. Interacts with TTC19 and KIF13A.

It is found in the cytoplasm. The protein resides in the cytoskeleton. The protein localises to the microtubule organizing center. It localises to the centrosome. Its subcellular location is the midbody. Phosphatidylinositol 3-phosphate-binding protein required for the abscission step in cytokinesis: recruited to the midbody during cytokinesis and acts as a regulator of abscission. May also be required for efficient homologous recombination DNA double-strand break repair. The protein is Zinc finger FYVE domain-containing protein 26 (ZFYVE26) of Ailuropoda melanoleuca (Giant panda).